Here is a 587-residue protein sequence, read N- to C-terminus: ATP-dependent lipid A-core flippase (587 aa).

5 consecutive transmembrane segments (helical) span residues 31-51 (LIVS…LIYL), 68-88 (LKMM…TNFI), 145-165 (GSLI…AVMF), 166-186 (YTSW…AVLI), and 259-279 (VQVI…TPLI). Residues 32-315 (IVSGVALVFN…LTAVNAQFQS (284 aa)) enclose the ABC transmembrane type-1 domain. Residues 347–583 (LEFKNVSFAY…NGAYKQLHSM (237 aa)) enclose the ABC transporter domain. An ATP-binding site is contributed by 381-388 (GRSGSGKS).

The protein belongs to the ABC transporter superfamily. Lipid exporter (TC 3.A.1.106) family. In terms of assembly, homodimer.

The protein localises to the cell inner membrane. It carries out the reaction ATP + H2O + lipid A-core oligosaccharideSide 1 = ADP + phosphate + lipid A-core oligosaccharideSide 2.. Involved in lipopolysaccharide (LPS) biosynthesis. Translocates lipid A-core from the inner to the outer leaflet of the inner membrane. Transmembrane domains (TMD) form a pore in the inner membrane and the ATP-binding domain (NBD) is responsible for energy generation. The sequence is that of ATP-dependent lipid A-core flippase from Haemophilus influenzae (strain ATCC 51907 / DSM 11121 / KW20 / Rd).